The sequence spans 458 residues: MSSGHIVQVIGAVMDVEFPRDSVPKVYDALTIEGKQLVLEVQQQLGDGIVRTIAMGSTDGIKRGLVVENTNKPVSVPVGTKTLGRIMDVLGNPIDEKGPIGEEERWSIHRSAPSYAEQSSSNELLETGIKVIDLVCPFAKGGKVGLFGGAGVGKTVNMMELIRNIAIEHSGYSVFAGVGERTREGNDFYHEMTDSNVIDKVSLVYGQMNEPPGNRLRVALTGLTMAEKFRDEGRDVLFFVDNIYRYTLAGTEVSALLGRMPSAVGYQPTLAEEMGVLQERITSTKTGSITSVQAVYVPADDLTDPSPATTFSHLDATVVLSRDIASLGIYPAIDPLDSTSRQLDPLVIGQEHYDVARGVQMVLQRYKELKDIIAILGMDELSEEDKQTVNRSRKIQRFLSQPFFVAEVFTGSPGKYVSLKDTIRGFKGILDGEFDDLPEQAFYMIGSIDEAVEKAKKL.

148-155 (GGAGVGKT) provides a ligand contact to ATP.

It belongs to the ATPase alpha/beta chains family. In terms of assembly, F-type ATPases have 2 components, CF(1) - the catalytic core - and CF(0) - the membrane proton channel. CF(1) has five subunits: alpha(3), beta(3), gamma(1), delta(1), epsilon(1). CF(0) has three main subunits: a(1), b(2) and c(9-12). The alpha and beta chains form an alternating ring which encloses part of the gamma chain. CF(1) is attached to CF(0) by a central stalk formed by the gamma and epsilon chains, while a peripheral stalk is formed by the delta and b chains.

The protein resides in the cell inner membrane. The catalysed reaction is ATP + H2O + 4 H(+)(in) = ADP + phosphate + 5 H(+)(out). Functionally, produces ATP from ADP in the presence of a proton gradient across the membrane. The catalytic sites are hosted primarily by the beta subunits. In Marinomonas sp. (strain MWYL1), this protein is ATP synthase subunit beta 2.